The sequence spans 856 residues: Wall-associated receptor kinase 17 (856 aa).

An N-terminal signal peptide occupies residues 1–42 (MPSRSPACRPRGRNRRSAADAVARPLALALILVSTLPRAAHS). 2 N-linked (GlcNAc...) asparagine glycosylation sites follow: Asn171 and Asn234. The EGF-like 1 domain occupies 297–334 (FEKLCKYGTCVDAPTGAGYLCKCPSGYDGNPYVSDGCQ). Cystine bridges form between Cys301–Cys306, Cys319–Cys333, Cys339–Cys353, Cys347–Cys362, and Cys364–Cys379. In terms of domain architecture, EGF-like 2; calcium-binding spans 335–380 (DINECRNYNSNNCTYQNLCNNTLGGYTCSCPENNIGDGYRTGTGCN). N-linked (GlcNAc...) asparagine glycosylation is found at Asn346 and Asn354. Asn380 carries N-linked (GlcNAc...) asparagine glycosylation. Residues 452–470 (VLGVSLVLMVTTTTAASCY) traverse the membrane as a helical segment. The 279-residue stretch at 527-805 (YSESRILGRG…VLQELRRSFT (279 aa)) folds into the Protein kinase domain. Residues 533 to 541 (LGRGGQGTV) and Lys555 each bind ATP. The active-site Proton acceptor is Asp652. A disordered region spans residues 816–844 (SIQENSEQEEKHLHESRSIPSLQSSEVST). The segment covering 823–832 (QEEKHLHESR) has biased composition (basic and acidic residues). Residues 833–844 (SIPSLQSSEVST) show a composition bias toward polar residues.

Belongs to the protein kinase superfamily. Ser/Thr protein kinase family. In terms of assembly, interacts with WAK17 isoform 2; the interaction is direct. Interacts with LRR5; the interaction is direct. As to quaternary structure, interacts with WAK17 isoform 1; the interaction is direct. (Microbial infection) Interacts with G.zeae CFEM1 (via CFEM domain); the interaction is direct. Interacts with G.zeae CFEMN1; the interaction is direct. Interacts with G.zeae CFEM5; the interaction is direct. Requires Mn(2+) as cofactor. Mg(2+) is required as a cofactor.

Its subcellular location is the cell membrane. It carries out the reaction L-seryl-[protein] + ATP = O-phospho-L-seryl-[protein] + ADP + H(+). The enzyme catalyses L-threonyl-[protein] + ATP = O-phospho-L-threonyl-[protein] + ADP + H(+). In terms of biological role, kinase that contributes to activation of the hypersensitive response, a form of programmed cell death, upon fungal infection. Secreted protein that contributes to activation of the hypersensitive response, a form of programmed cell death, upon fungal infection. May sense the presence of fungal material and relay the signal to WAK17 isoform 1. This Zea mays (Maize) protein is Wall-associated receptor kinase 17.